Here is a 181-residue protein sequence, read N- to C-terminus: Adenylate kinase (181 aa).

Residue 10-15 (GAGKGT) coordinates ATP. The tract at residues 30–59 (STGELFRRNIEKDTKLGHEAKKYLDAGDLV) is NMP. Residues Thr-31, Arg-36, 57–59 (DLV), 85–88 (GYPR), and Gln-92 contribute to the AMP site. Residues 126–132 (GRGRADD) form an LID region. Arg-127 is a binding site for ATP. Positions 129 and 140 each coordinate AMP. Residue Gly-166 coordinates ATP.

The protein belongs to the adenylate kinase family. Monomer.

It is found in the cytoplasm. It carries out the reaction AMP + ATP = 2 ADP. Its pathway is purine metabolism; AMP biosynthesis via salvage pathway; AMP from ADP: step 1/1. Catalyzes the reversible transfer of the terminal phosphate group between ATP and AMP. Plays an important role in cellular energy homeostasis and in adenine nucleotide metabolism. In Mycobacterium leprae (strain Br4923), this protein is Adenylate kinase.